Here is a 78-residue protein sequence, read N- to C-terminus: DNA-directed RNA polymerase subunit Rpo5 (78 aa).

The protein belongs to the archaeal Rpo5/eukaryotic RPB5 RNA polymerase subunit family. In terms of assembly, part of the RNA polymerase complex.

Its subcellular location is the cytoplasm. It catalyses the reaction RNA(n) + a ribonucleoside 5'-triphosphate = RNA(n+1) + diphosphate. DNA-dependent RNA polymerase (RNAP) catalyzes the transcription of DNA into RNA using the four ribonucleoside triphosphates as substrates. The protein is DNA-directed RNA polymerase subunit Rpo5 of Methanosarcina acetivorans (strain ATCC 35395 / DSM 2834 / JCM 12185 / C2A).